The primary structure comprises 459 residues: ATP-dependent protease ATPase subunit HslU (459 aa).

ATP is bound by residues Val26, 68–73 (GVGKTE), Asp271, Glu337, and Arg409.

This sequence belongs to the ClpX chaperone family. HslU subfamily. As to quaternary structure, a double ring-shaped homohexamer of HslV is capped on each side by a ring-shaped HslU homohexamer. The assembly of the HslU/HslV complex is dependent on binding of ATP.

Its subcellular location is the cytoplasm. Its function is as follows. ATPase subunit of a proteasome-like degradation complex; this subunit has chaperone activity. The binding of ATP and its subsequent hydrolysis by HslU are essential for unfolding of protein substrates subsequently hydrolyzed by HslV. HslU recognizes the N-terminal part of its protein substrates and unfolds these before they are guided to HslV for hydrolysis. The sequence is that of ATP-dependent protease ATPase subunit HslU from Xylella fastidiosa (strain M23).